The following is a 125-amino-acid chain: MSNLLKEFNEQQIKLLSNREIPKFKSGDTLRVTMKIFDSAGERIQTFEGVCIKRRNNGLHSSFTLRKISYNESIQLQVFLYSPTIESIEVVKFGKVRRAKLYYMLSLFGKSARIKERIDRSKKSS.

The protein belongs to the bacterial ribosomal protein bL19 family.

Functionally, this protein is located at the 30S-50S ribosomal subunit interface and may play a role in the structure and function of the aminoacyl-tRNA binding site. In Ehrlichia ruminantium (strain Welgevonden), this protein is Large ribosomal subunit protein bL19.